A 901-amino-acid chain; its full sequence is Protein translocase subunit SecA (901 aa).

ATP is bound by residues glutamine 87, 105–109 (GEGKT), and aspartate 512. The interval 852–901 (AQMQQLSHQSDDEAAAQDLAAQTGERKVGRNDPCPCGSGKKYKQCHGRLS) is disordered. The Zn(2+) site is built by cysteine 885, cysteine 887, cysteine 896, and histidine 897. Basic residues predominate over residues 891–901 (KKYKQCHGRLS).

The protein belongs to the SecA family. Monomer and homodimer. Part of the essential Sec protein translocation apparatus which comprises SecA, SecYEG and auxiliary proteins SecDF-YajC and YidC. Requires Zn(2+) as cofactor.

The protein localises to the cell inner membrane. Its subcellular location is the cytoplasm. It catalyses the reaction ATP + H2O + cellular proteinSide 1 = ADP + phosphate + cellular proteinSide 2.. Its function is as follows. Part of the Sec protein translocase complex. Interacts with the SecYEG preprotein conducting channel. Has a central role in coupling the hydrolysis of ATP to the transfer of proteins into and across the cell membrane, serving both as a receptor for the preprotein-SecB complex and as an ATP-driven molecular motor driving the stepwise translocation of polypeptide chains across the membrane. This Klebsiella pneumoniae subsp. pneumoniae (strain ATCC 700721 / MGH 78578) protein is Protein translocase subunit SecA.